Here is a 55-residue protein sequence, read N- to C-terminus: MPQLNPNPWLFIMLMSWLTFSLIIQPKLLPFTPINPPSNKTPTTTKTSPWTWPWT.

The helical transmembrane segment at 7 to 24 (NPWLFIMLMSWLTFSLII) threads the bilayer. The segment at 35–55 (NPPSNKTPTTTKTSPWTWPWT) is disordered. Residues 37 to 55 (PSNKTPTTTKTSPWTWPWT) show a composition bias toward low complexity.

Belongs to the ATPase protein 8 family. In terms of assembly, F-type ATPases have 2 components, CF(1) - the catalytic core - and CF(0) - the membrane proton channel.

It is found in the mitochondrion membrane. Its function is as follows. Mitochondrial membrane ATP synthase (F(1)F(0) ATP synthase or Complex V) produces ATP from ADP in the presence of a proton gradient across the membrane which is generated by electron transport complexes of the respiratory chain. F-type ATPases consist of two structural domains, F(1) - containing the extramembraneous catalytic core and F(0) - containing the membrane proton channel, linked together by a central stalk and a peripheral stalk. During catalysis, ATP synthesis in the catalytic domain of F(1) is coupled via a rotary mechanism of the central stalk subunits to proton translocation. Part of the complex F(0) domain. Minor subunit located with subunit a in the membrane. The polypeptide is ATP synthase protein 8 (MT-ATP8) (Corythaeola cristata (Great blue turaco)).